Reading from the N-terminus, the 396-residue chain is Elongation factor Tu (396 aa).

One can recognise a tr-type G domain in the interval 11 to 205 (KPHVNIGTIG…VVDEYIPTPE (195 aa)). Residues 20-27 (GHVDHGKT) are G1. 20–27 (GHVDHGKT) provides a ligand contact to GTP. Threonine 27 serves as a coordination point for Mg(2+). The interval 61-65 (GITIN) is G2. The interval 82 to 85 (DAPG) is G3. Residues 82 to 86 (DAPGH) and 137 to 140 (NKCD) contribute to the GTP site. Positions 137–140 (NKCD) are G4. A G5 region spans residues 175–177 (SAL).

Belongs to the TRAFAC class translation factor GTPase superfamily. Classic translation factor GTPase family. EF-Tu/EF-1A subfamily. In terms of assembly, monomer.

Its subcellular location is the cytoplasm. It carries out the reaction GTP + H2O = GDP + phosphate + H(+). Its function is as follows. GTP hydrolase that promotes the GTP-dependent binding of aminoacyl-tRNA to the A-site of ribosomes during protein biosynthesis. This is Elongation factor Tu from Lactobacillus delbrueckii subsp. bulgaricus (strain ATCC 11842 / DSM 20081 / BCRC 10696 / JCM 1002 / NBRC 13953 / NCIMB 11778 / NCTC 12712 / WDCM 00102 / Lb 14).